The sequence spans 838 residues: MFDITRKCVEWGDRSLTIESGKIARQAGGAVVVDYGGTSVLATVVSQKSKEAVDFLPLTVQFLAKSYAVGKIPGGFFKREGKPSDRETLISRIIDRSIRPLFPSGFSDEVAVVCNLLSYDASSPPETVALIGASAALAISGIPFHCPVAGARIGYIRGEGRYILNPSADELSVSALDMFYARTDTSILMVESEAHELTEAEMLGALQFGHEHCEEIIKVIGEFAEEARKCAPAEFVPCDLSTIIDSIGSDYKERFLVAYSEKEKKARVAKLDAVRASLTEDLRVKFLSESEGGSKYIAQDIVYAMKTFERSLVRERVLESKSRIDGRAYDQIRNIEIEVDLISKAHGSALFTRGDTQALVITALGTPQDEQIVDGFDGDKRERFLLHYNFPPYAVGEASALRPPGRREIGHGKLAWRAIHPVLPSKADFPYTIRVVSEITESDGSSSMATVCGASLALMDTGVPLKSSVAGIAMGLIKEGDRYAILSDILGDEDYLGDMDFKVAGTREGITALQMDMKVKGIDFAVLGTALDQAKEGRFFIIEKMDRVIKESRGAVREHVPRMESMLIDKGKIKNVIGAGGKNVREICEKTGAKIEISQDGTVMIYAVGREAIESAKDMITGIVSEPEVGKIYSGEVCELAKYGAFVTFLGARKGLVHISEIRNEHINAVADVLAVGDKVKVLVIDMDKDHIQLSMRRIDQETGDQVDCELYAPQRRNGVAAGNTVGDSSVNGGGAGSVYVPRGDYGGASAGRNGRGGGKRDGAAKSSSSAGNGGGRSSSSTRRRHSAGSSGYSSDSSSGNTKSSSSESSGGTGGRGRNGANGDVQNGPAAPKKPRFF.

Mg(2+) contacts are provided by Asp-494 and Asp-500. The 60-residue stretch at 561–620 (PRMESMLIDKGKIKNVIGAGGKNVREICEKTGAKIEISQDGTVMIYAVGREAIESAKDMI) folds into the KH domain. Positions 630–697 (GKIYSGEVCE…DKDHIQLSMR (68 aa)) constitute an S1 motif domain. The span at 747 to 757 (GGASAGRNGRG) shows a compositional bias: gly residues. A disordered region spans residues 747-838 (GGASAGRNGR…PAAPKKPRFF (92 aa)). Over residues 788–810 (AGSSGYSSDSSSGNTKSSSSESS) the composition is skewed to low complexity. Positions 811–820 (GGTGGRGRNG) are enriched in gly residues.

Belongs to the polyribonucleotide nucleotidyltransferase family. Requires Mg(2+) as cofactor.

The protein localises to the cytoplasm. The catalysed reaction is RNA(n+1) + phosphate = RNA(n) + a ribonucleoside 5'-diphosphate. In terms of biological role, involved in mRNA degradation. Catalyzes the phosphorolysis of single-stranded polyribonucleotides processively in the 3'- to 5'-direction. This Anaplasma phagocytophilum (strain HZ) protein is Polyribonucleotide nucleotidyltransferase.